The sequence spans 73 residues: Defensin-like protein 34 (73 aa).

The first 25 residues, 1 to 25 (MASNKVSFFLVLCLCVLSTAEFGEA), serve as a signal peptide directing secretion. 3 disulfide bridges follow: cysteine 33-cysteine 59, cysteine 45-cysteine 68, and cysteine 49-cysteine 70.

This sequence belongs to the DEFL family.

The protein localises to the secreted. The sequence is that of Defensin-like protein 34 from Arabidopsis thaliana (Mouse-ear cress).